The sequence spans 596 residues: Bromodomain-containing protein 9 (596 aa).

Residues 1–10 (MGKKHKKHKA) show a composition bias toward basic residues. Disordered stretches follow at residues 1 to 26 (MGKKHKKHKAEWRSSYEDYTDTPLEK) and 38 to 137 (EVTE…AENE). Positions 50–62 (SYYDDRSDHERER) are enriched in basic and acidic residues. Serine 56 bears the Phosphoserine mark. Positions 63-73 (HREKKKKKKKK) are enriched in basic residues. The span at 74–85 (SEKEKHLDEEER) shows a compositional bias: basic and acidic residues. Residues 86 to 97 (RKRKEEKKRKRE) are compositionally biased toward basic residues. Basic and acidic residues predominate over residues 111 to 126 (DPGKKVEVEPPPDRPV). Positions 136 to 240 (NESTPIQRLL…HAGFKMMSKA (105 aa)) constitute a Bromo domain. Residues 214–216 (TYN) form a histone H4K5ac H4K8ac and histone H4K5bu H4K8bu binding region. Position 372 is an N6-acetyllysine; alternate (lysine 372). A Glycyl lysine isopeptide (Lys-Gly) (interchain with G-Cter in SUMO2); alternate cross-link involves residue lysine 372. The segment at 536–596 (AQAERGGSRP…SPEPAAPAKN (61 aa)) is disordered. Low complexity predominate over residues 543–555 (SRPSSNLSSLSTA). Phosphoserine occurs at positions 565 and 587.

Binds acetylated histones H3 and H4. Binds butyrylated histone H4. Component of the multiprotein chromatin-remodeling subcomplex SWI/SNF called GBAF, which includes at least BICRA or BICRAL (mutually exclusive), BRD9, SS18, the core BAF subunits, SMARCA2/BRM, SMARCA4/BRG1/BAF190A, ACTL6A/BAF53, SMARCC1/BAF155, and SMARCD1/BAF60A. Interacts (via N-terminal bromodomain) with acetylated RAD54. Interacts (via C-terminus) with RAD51.

The protein resides in the nucleus. Its function is as follows. Plays a role in chromatin remodeling and regulation of transcription. Acts as a chromatin reader that recognizes and binds acylated histones: binds histones that are acetylated and/or butyrylated. Component of SWI/SNF chromatin remodeling subcomplex GBAF that carries out key enzymatic activities, changing chromatin structure by altering DNA-histone contacts within a nucleosome in an ATP-dependent manner. Also orchestrates the RAD51-RAD54 complex formation and thereby plays a role in homologous recombination (HR). The chain is Bromodomain-containing protein 9 (Brd9) from Mus musculus (Mouse).